A 280-amino-acid polypeptide reads, in one-letter code: Tryptophan synthase alpha chain (280 aa).

Active-site proton acceptor residues include Glu-49 and Asp-60.

This sequence belongs to the TrpA family. In terms of assembly, tetramer of two alpha and two beta chains.

It carries out the reaction (1S,2R)-1-C-(indol-3-yl)glycerol 3-phosphate + L-serine = D-glyceraldehyde 3-phosphate + L-tryptophan + H2O. Its pathway is amino-acid biosynthesis; L-tryptophan biosynthesis; L-tryptophan from chorismate: step 5/5. Functionally, the alpha subunit is responsible for the aldol cleavage of indoleglycerol phosphate to indole and glyceraldehyde 3-phosphate. This is Tryptophan synthase alpha chain from Corynebacterium glutamicum (strain ATCC 13032 / DSM 20300 / JCM 1318 / BCRC 11384 / CCUG 27702 / LMG 3730 / NBRC 12168 / NCIMB 10025 / NRRL B-2784 / 534).